We begin with the raw amino-acid sequence, 289 residues long: ATP phosphoribosyltransferase (289 aa).

The protein belongs to the ATP phosphoribosyltransferase family. Long subfamily. It depends on Mg(2+) as a cofactor.

It localises to the cytoplasm. It catalyses the reaction 1-(5-phospho-beta-D-ribosyl)-ATP + diphosphate = 5-phospho-alpha-D-ribose 1-diphosphate + ATP. The protein operates within amino-acid biosynthesis; L-histidine biosynthesis; L-histidine from 5-phospho-alpha-D-ribose 1-diphosphate: step 1/9. Feedback inhibited by histidine. Functionally, catalyzes the condensation of ATP and 5-phosphoribose 1-diphosphate to form N'-(5'-phosphoribosyl)-ATP (PR-ATP). Has a crucial role in the pathway because the rate of histidine biosynthesis seems to be controlled primarily by regulation of HisG enzymatic activity. The protein is ATP phosphoribosyltransferase of Desulforudis audaxviator (strain MP104C).